Consider the following 314-residue polypeptide: tRNA(Ile)-lysidine synthase (314 aa).

37-42 (SGGPDS) contributes to the ATP binding site.

Belongs to the tRNA(Ile)-lysidine synthase family.

The protein localises to the cytoplasm. The enzyme catalyses cytidine(34) in tRNA(Ile2) + L-lysine + ATP = lysidine(34) in tRNA(Ile2) + AMP + diphosphate + H(+). Ligates lysine onto the cytidine present at position 34 of the AUA codon-specific tRNA(Ile) that contains the anticodon CAU, in an ATP-dependent manner. Cytidine is converted to lysidine, thus changing the amino acid specificity of the tRNA from methionine to isoleucine. This Corynebacterium glutamicum (strain ATCC 13032 / DSM 20300 / JCM 1318 / BCRC 11384 / CCUG 27702 / LMG 3730 / NBRC 12168 / NCIMB 10025 / NRRL B-2784 / 534) protein is tRNA(Ile)-lysidine synthase.